We begin with the raw amino-acid sequence, 499 residues long: Signal recognition particle subunit SRP54 2 (499 aa).

Residues 1–295 (MVLAELGGSI…DVKPFVSRLL (295 aa)) form a G-domain region. GTP-binding positions include 108 to 115 (GLQGSGKT), 190 to 194 (DTSGR), and 248 to 251 (TKMD). Positions 296 to 499 (GMGDWSGFMD…MGGMFGGGDK (204 aa)) are M-domain.

It belongs to the GTP-binding SRP family. SRP54 subfamily. As to quaternary structure, component of a signal recognition particle (SRP) complex that consists of a 7SL RNA molecule of 300 nucleotides and six protein subunits: SRP72, SRP68, SRP54, SRP19, SRP14 and SRP9.

It localises to the cytoplasm. Its subcellular location is the endoplasmic reticulum. The catalysed reaction is GTP + H2O = GDP + phosphate + H(+). Functionally, component of the signal recognition particle (SRP) complex, a ribonucleoprotein complex that mediates the cotranslational targeting of secretory and membrane proteins to the endoplasmic reticulum (ER). As part of the SRP complex, associates with the SRP receptor (SR) component SRPRA to target secretory proteins to the endoplasmic reticulum membrane. Binds to the signal sequence of presecretory proteins when they emerge from the ribosomes. Displays basal GTPase activity, and stimulates reciprocal GTPase activation of the SR subunit SRPRA. Forms a guanosine 5'-triphosphate (GTP)-dependent complex with the SR subunit SRPRA. SR compaction and GTPase mediated rearrangement of SR drive SRP-mediated cotranslational protein translocation into the ER. Requires the presence of SRP9/SRP14 and/or SRP19 to stably interact with RNA. This Solanum lycopersicum (Tomato) protein is Signal recognition particle subunit SRP54 2.